Reading from the N-terminus, the 78-residue chain is Molt-inhibiting hormone (78 aa).

3 disulfides stabilise this stretch: cysteine 7-cysteine 44, cysteine 24-cysteine 40, and cysteine 27-cysteine 53.

The protein localises to the secreted. In terms of biological role, inhibits Y-organs where molting hormone (ecdysteroid) is secreted. A molting cycle is initiated when MIH secretion diminishes or stops. Also has significant hyperglycemic hormone (CHH) activity. This is Molt-inhibiting hormone from Cancer pagurus (Rock crab).